The sequence spans 296 residues: tRNA uridine(34) hydroxylase (296 aa).

A Rhodanese domain is found at 130 to 225 (RGEDVVFFDG…YGEAYGDRGL (96 aa)). Cysteine 185 serves as the catalytic Cysteine persulfide intermediate.

Belongs to the TrhO family.

The catalysed reaction is uridine(34) in tRNA + AH2 + O2 = 5-hydroxyuridine(34) in tRNA + A + H2O. Functionally, catalyzes oxygen-dependent 5-hydroxyuridine (ho5U) modification at position 34 in tRNAs. The protein is tRNA uridine(34) hydroxylase of Kocuria rhizophila (strain ATCC 9341 / DSM 348 / NBRC 103217 / DC2201).